Consider the following 287-residue polypeptide: ATP synthase gamma chain (287 aa).

Belongs to the ATPase gamma chain family. As to quaternary structure, F-type ATPases have 2 components, CF(1) - the catalytic core - and CF(0) - the membrane proton channel. CF(1) has five subunits: alpha(3), beta(3), gamma(1), delta(1), epsilon(1). CF(0) has three main subunits: a, b and c.

It is found in the cell inner membrane. Its function is as follows. Produces ATP from ADP in the presence of a proton gradient across the membrane. The gamma chain is believed to be important in regulating ATPase activity and the flow of protons through the CF(0) complex. This chain is ATP synthase gamma chain, found in Tolumonas auensis (strain DSM 9187 / NBRC 110442 / TA 4).